We begin with the raw amino-acid sequence, 226 residues long: ATP synthase F(0) complex subunit a (226 aa).

The next 6 membrane-spanning stretches (helical) occupy residues Ala-11–Phe-31, Trp-68–Leu-88, Gln-97–Phe-117, Ile-138–Val-158, Ile-164–Ile-184, and Ala-189–Ile-209.

The protein belongs to the ATPase A chain family. As to quaternary structure, component of the ATP synthase complex composed at least of ATP5F1A/subunit alpha, ATP5F1B/subunit beta, ATP5MC1/subunit c (homooctomer), MT-ATP6/subunit a, MT-ATP8/subunit 8, ATP5ME/subunit e, ATP5MF/subunit f, ATP5MG/subunit g, ATP5MK/subunit k, ATP5MJ/subunit j, ATP5F1C/subunit gamma, ATP5F1D/subunit delta, ATP5F1E/subunit epsilon, ATP5PF/subunit F6, ATP5PB/subunit b, ATP5PD/subunit d, ATP5PO/subunit OSCP. ATP synthase complex consists of a soluble F(1) head domain (subunits alpha(3) and beta(3)) - the catalytic core - and a membrane F(0) domain - the membrane proton channel (subunits c, a, 8, e, f, g, k and j). These two domains are linked by a central stalk (subunits gamma, delta, and epsilon) rotating inside the F1 region and a stationary peripheral stalk (subunits F6, b, d, and OSCP). Interacts with DNAJC30; interaction is direct.

It is found in the mitochondrion inner membrane. It catalyses the reaction H(+)(in) = H(+)(out). Functionally, subunit a, of the mitochondrial membrane ATP synthase complex (F(1)F(0) ATP synthase or Complex V) that produces ATP from ADP in the presence of a proton gradient across the membrane which is generated by electron transport complexes of the respiratory chain. ATP synthase complex consist of a soluble F(1) head domain - the catalytic core - and a membrane F(1) domain - the membrane proton channel. These two domains are linked by a central stalk rotating inside the F(1) region and a stationary peripheral stalk. During catalysis, ATP synthesis in the catalytic domain of F(1) is coupled via a rotary mechanism of the central stalk subunits to proton translocation. With the subunit c (ATP5MC1), forms the proton-conducting channel in the F(0) domain, that contains two crucial half-channels (inlet and outlet) that facilitate proton movement from the mitochondrial intermembrane space (IMS) into the matrix. Protons are taken up via the inlet half-channel and released through the outlet half-channel, following a Grotthuss mechanism. The chain is ATP synthase F(0) complex subunit a from Canis lupus familiaris (Dog).